The sequence spans 85 residues: Small ribosomal subunit protein bS16 (85 aa).

It belongs to the bacterial ribosomal protein bS16 family.

The chain is Small ribosomal subunit protein bS16 from Xanthomonas oryzae pv. oryzae (strain PXO99A).